A 1400-amino-acid polypeptide reads, in one-letter code: DNA-directed RNA polymerase subunit beta' (1400 aa).

The Zn(2+) site is built by C70, C72, C85, and C88. Mg(2+)-binding residues include D460, D462, and D464. 4 residues coordinate Zn(2+): C814, C888, C895, and C898.

The protein belongs to the RNA polymerase beta' chain family. As to quaternary structure, the RNAP catalytic core consists of 2 alpha, 1 beta, 1 beta' and 1 omega subunit. When a sigma factor is associated with the core the holoenzyme is formed, which can initiate transcription. Mg(2+) is required as a cofactor. Requires Zn(2+) as cofactor.

It catalyses the reaction RNA(n) + a ribonucleoside 5'-triphosphate = RNA(n+1) + diphosphate. Functionally, DNA-dependent RNA polymerase catalyzes the transcription of DNA into RNA using the four ribonucleoside triphosphates as substrates. This is DNA-directed RNA polymerase subunit beta' from Vibrio vulnificus (strain CMCP6).